The following is a 268-amino-acid chain: Eukaryotic translation initiation factor 2 subunit beta (268 aa).

Over residues 1–12 (MADEINEIREEQ) the composition is skewed to basic and acidic residues. The segment at 1–85 (MADEINEIRE…LNNESVDAGE (85 aa)) is disordered. A2 carries the post-translational modification N-acetylalanine. Phosphoserine; by CK2 occurs at positions 42, 80, and 112. The C4-type zinc finger occupies 222-246 (CLGCKSPDTILSKENRLFFLRCEKC).

The protein belongs to the eIF-2-beta/eIF-5 family. In terms of assembly, eukaryotic translation initiation factor 2 eIF2 is a heterotrimeric complex composed of an alpha, a beta and a gamma subunit. Phosphorylated at Ser-42, Ser-80 and Ser-112 by CK2.

It localises to the cytoplasm. The protein localises to the cytosol. In terms of biological role, component of the eIF2 complex that functions in the early steps of protein synthesis by forming a ternary complex with GTP and initiator tRNA. This complex binds to a 40S ribosomal subunit, followed by mRNA binding to form a 43S pre-initiation complex (43S PIC). Junction of the 60S ribosomal subunit to form the 80S initiation complex is preceded by hydrolysis of the GTP bound to eIF2 and release of an eIF2-GDP binary complex. In order for eIF2 to recycle and catalyze another round of initiation, the GDP bound to eIF2 must exchange with GTP by way of a reaction catalyzed by eIF2B. The polypeptide is Eukaryotic translation initiation factor 2 subunit beta (Arabidopsis thaliana (Mouse-ear cress)).